A 230-amino-acid polypeptide reads, in one-letter code: Glutathione S-transferase 2 (230 aa).

A GST N-terminal domain is found at alanine 2–arginine 86. The GST C-terminal domain occupies aspartate 93 to histidine 230.

It belongs to the GST superfamily.

The catalysed reaction is RX + glutathione = an S-substituted glutathione + a halide anion + H(+). Its function is as follows. Involved in the oxidative stress response and detoxification. This is Glutathione S-transferase 2 (gst2) from Schizosaccharomyces pombe (strain 972 / ATCC 24843) (Fission yeast).